A 229-amino-acid polypeptide reads, in one-letter code: Large ribosomal subunit protein uL1 (229 aa).

This sequence belongs to the universal ribosomal protein uL1 family. In terms of assembly, part of the 50S ribosomal subunit.

Binds directly to 23S rRNA. The L1 stalk is quite mobile in the ribosome, and is involved in E site tRNA release. Functionally, protein L1 is also a translational repressor protein, it controls the translation of the L11 operon by binding to its mRNA. This chain is Large ribosomal subunit protein uL1, found in Histophilus somni (strain 129Pt) (Haemophilus somnus).